The chain runs to 155 residues: Small ribosomal subunit protein uS7c (155 aa).

It belongs to the universal ribosomal protein uS7 family. Part of the 30S ribosomal subunit.

The protein resides in the plastid. Its subcellular location is the chloroplast. Its function is as follows. One of the primary rRNA binding proteins, it binds directly to 16S rRNA where it nucleates assembly of the head domain of the 30S subunit. The sequence is that of Small ribosomal subunit protein uS7c (rps7) from Physcomitrium patens (Spreading-leaved earth moss).